The sequence spans 462 residues: Runt-related transcription factor 1 (462 aa).

Residues 1 to 27 (MRIPVDTSTSRRFTPPSTTLSPGKMSE) form a disordered region. Over residues 7–22 (TSTSRRFTPPSTTLSP) the composition is skewed to low complexity. A Runt domain is found at 50 to 178 (NMVEVLSDHP…TVDGPREPRR (129 aa)). An interaction with DNA region spans residues 80-84 (RCNKT). 4 residues coordinate chloride: asparagine 112, glutamate 116, arginine 139, and valine 170. Interaction with DNA regions lie at residues 135 to 143 (RFVGRSGRG) and 168 to 177 (ITVDGPREPR). The tract at residues 399–462 (MMSGGERSPP…RLEEAVWRPY (64 aa)) is disordered. 2 stretches are compositionally biased toward polar residues: residues 415–433 (TNAS…NQSD) and 440–450 (SHSNSPTNMGS). The span at 453–462 (RLEEAVWRPY) shows a compositional bias: basic and acidic residues.

Heterodimer with cbfb. runx1 binds DNA as a monomer and through the Runt domain. DNA-binding is increased by heterodimerization. Shows a complex and dynamic expression pattern. In stage 14-24 embryos, expressed in a subset of neuroblasts in the lateral stripe of the neural plate. In late neurula stages, expression begins in the olfactory placodes. Also expressed in structures that play a role in blood formation: at stage 14, expressed on the anterior ventral side of the embryo in the anterior endomesoderm. As the embryo elongates, expression shifts gradually to a V-shaped expression pattern in the presumptive ventral blood island.

It is found in the nucleus. Involved in primitive hematopoiesis in the embryo. The protein is Runt-related transcription factor 1 of Xenopus laevis (African clawed frog).